Consider the following 464-residue polypeptide: 3-isopropylmalate dehydratase large subunit (464 aa).

[4Fe-4S] cluster-binding residues include cysteine 345, cysteine 405, and cysteine 408.

This sequence belongs to the aconitase/IPM isomerase family. LeuC type 1 subfamily. Heterodimer of LeuC and LeuD. Requires [4Fe-4S] cluster as cofactor.

It carries out the reaction (2R,3S)-3-isopropylmalate = (2S)-2-isopropylmalate. Its pathway is amino-acid biosynthesis; L-leucine biosynthesis; L-leucine from 3-methyl-2-oxobutanoate: step 2/4. In terms of biological role, catalyzes the isomerization between 2-isopropylmalate and 3-isopropylmalate, via the formation of 2-isopropylmaleate. The chain is 3-isopropylmalate dehydratase large subunit from Bacteroides thetaiotaomicron (strain ATCC 29148 / DSM 2079 / JCM 5827 / CCUG 10774 / NCTC 10582 / VPI-5482 / E50).